The sequence spans 754 residues: Endoribonuclease Dicer-like (754 aa).

In terms of domain architecture, PAZ spans 132–251 (QLMCDAKRLS…LPPELCLLLP (120 aa)). RNase III domains lie at 298–418 (FAIT…TGPN) and 613–734 (AQTV…LACG). Mn(2+)-binding residues include Glu-336, Asp-404, Glu-407, Glu-649, Asp-720, and Glu-723.

Homodimer. Mg(2+) serves as cofactor. It depends on Mn(2+) as a cofactor.

In terms of biological role, involved in cleaving double-stranded RNA in the RNA interference (RNAi) pathway. It produces 21 to 23 bp dsRNAs (siRNAs) which target the selective destruction of homologous RNAs. The polypeptide is Endoribonuclease Dicer-like (Giardia intestinalis (strain ATCC 50803 / WB clone C6) (Giardia lamblia)).